Consider the following 198-residue polypeptide: Large ribosomal subunit protein bL25 (198 aa).

It belongs to the bacterial ribosomal protein bL25 family. CTC subfamily. As to quaternary structure, part of the 50S ribosomal subunit; part of the 5S rRNA/L5/L18/L25 subcomplex. Contacts the 5S rRNA. Binds to the 5S rRNA independently of L5 and L18.

Functionally, this is one of the proteins that binds to the 5S RNA in the ribosome where it forms part of the central protuberance. The protein is Large ribosomal subunit protein bL25 of Chlorobium phaeobacteroides (strain DSM 266 / SMG 266 / 2430).